Reading from the N-terminus, the 197-residue chain is Neurturin (197 aa).

Positions 1–19 are cleaved as a signal peptide; sequence MQRWKAAALASVLCSSVLS. A propeptide spanning residues 20–95 is cleaved from the precursor; that stretch reads IWMCREGLLL…RAGPRRRRAR (76 aa). Residues 74 to 93 are disordered; the sequence is TPWAGRPPGPRRRAGPRRRR. Over residues 82 to 93 the composition is skewed to basic residues; that stretch reads GPRRRAGPRRRR. 3 cysteine pairs are disulfide-bonded: cysteine 103-cysteine 165, cysteine 130-cysteine 194, and cysteine 134-cysteine 196. Positions 149, 158, 160, and 162 each coordinate heparan sulfate group.

This sequence belongs to the TGF-beta family. GDNF subfamily. As to quaternary structure, homodimer; disulfide-linked. Interacts with GFRA2 coreceptor and RET: forms a 2:2:2 ternary complex composed of NRTN ligand, GFRA2 and RET receptor. Also forms a 4:4:4 tetrameric complex composed of 4 copies of NRTN ligand, GFRA2 and RET receptor, which prevents endocytosis of RET.

The protein localises to the secreted. Functionally, growth factor that supports the survival of sympathetic neurons in culture. May regulate the development and maintenance of the CNS. Involved in the development of the neural crest. Might control the size of non-neuronal cell population such as haemopoietic cells. Acts by binding to its coreceptor, GFRA2, leading to autophosphorylation and activation of the RET receptor. Heparan sulfate-binding is required for signaling. The protein is Neurturin of Homo sapiens (Human).